The chain runs to 270 residues: MSKIAKTAIISPKAEINKGVEIGEFCVIGDGVKLDEGVKLHNNVTLQGHTFIGKNTEIFPFAVLGTQPQDLKYKGEYSELIVGEDNLIREFCMINPGTEGGIKKTLIGDKNLLMAYVHVAHDCVIGSHCILANGVTLAGHIEIGDYVNIGGLTAIHQFVRIAKGCMIAGKSALGKDVPPYCTVEGNRAFIRGLNRHRMRQLLESKDIDFIYALYKRLFRPIPSLRESAKLELEEHANNPFVKEICSFILASSRGVAYKSSEYSSEEKQEE.

This sequence belongs to the transferase hexapeptide repeat family. LpxA subfamily. In terms of assembly, homotrimer.

Its subcellular location is the cytoplasm. It catalyses the reaction a (3R)-hydroxyacyl-[ACP] + UDP-N-acetyl-alpha-D-glucosamine = a UDP-3-O-[(3R)-3-hydroxyacyl]-N-acetyl-alpha-D-glucosamine + holo-[ACP]. Its pathway is glycolipid biosynthesis; lipid IV(A) biosynthesis; lipid IV(A) from (3R)-3-hydroxytetradecanoyl-[acyl-carrier-protein] and UDP-N-acetyl-alpha-D-glucosamine: step 1/6. Functionally, involved in the biosynthesis of lipid A, a phosphorylated glycolipid that anchors the lipopolysaccharide to the outer membrane of the cell. This Helicobacter pylori (strain G27) protein is Acyl-[acyl-carrier-protein]--UDP-N-acetylglucosamine O-acyltransferase.